Consider the following 436-residue polypeptide: UDP-N-acetylmuramate--L-alanine ligase (436 aa).

110–116 (GAHGKTS) provides a ligand contact to ATP.

This sequence belongs to the MurCDEF family.

The protein resides in the cytoplasm. It carries out the reaction UDP-N-acetyl-alpha-D-muramate + L-alanine + ATP = UDP-N-acetyl-alpha-D-muramoyl-L-alanine + ADP + phosphate + H(+). The protein operates within cell wall biogenesis; peptidoglycan biosynthesis. Functionally, cell wall formation. The chain is UDP-N-acetylmuramate--L-alanine ligase from Lacticaseibacillus casei (strain BL23) (Lactobacillus casei).